The sequence spans 350 residues: C5a anaphylatoxin chemotactic receptor 1 (350 aa).

Over 1–37 (MDSFNYTTPDYGHYDDKDTLDPNTPVDKTSNTLRVPD) the chain is Extracellular. The interval 10–18 (DYGHYDDKD) is required for CHIPS binding. Sulfotyrosine occurs at positions 11 and 14. The tract at residues 21–30 (DPNTPVDKTS) is involved in C5a binding. Residues 38 to 64 (ILALVIFAVVFLVGVLGNALVVWVTAF) traverse the membrane as a helical segment. The Cytoplasmic segment spans residues 65–69 (EVKRT). The helical transmembrane segment at 70–93 (INAIWFLNLAVADFLSCLALPILF) threads the bilayer. The Extracellular portion of the chain corresponds to 94-110 (TSIVQHHHWPFGGAACR). Cys109 and Cys188 are disulfide-bonded. The chain crosses the membrane as a helical span at residues 111 to 132 (ILPSLILLNMYASILLLATISA). Residues 133–153 (DRFLLVFKPIWCQNFRGAGLA) lie on the Cytoplasmic side of the membrane. Residues 154–174 (WIACAVAWGLALLLTIPSFLY) form a helical membrane-spanning segment. At 175–200 (RVVREEYFPPKVLCGVDYSHDKQRER) the chain is on the extracellular side. The chain crosses the membrane as a helical span at residues 201–226 (AVAVVRLVLGFLWPLLTLTICYTFIL). Topologically, residues 227–242 (LRTWSRRATRSTKTLK) are cytoplasmic. The helical transmembrane segment at 243–265 (VVVAVVASFFIFWLPYQVTGIMM) threads the bilayer. Topologically, residues 266–282 (SFLEPSSPTFLLLKKLD) are extracellular. Residues 283–303 (SLCVSFAYINCCINPIIYVVA) traverse the membrane as a helical segment. Topologically, residues 304-350 (GQGFQGRLRKSLPSLLRNVLTEESVVRESKSFTRSTVDTMAEKTQAV) are cytoplasmic. Ser314, Ser317, Ser327, Ser332, Ser334, and Ser338 each carry phosphoserine.

Belongs to the G-protein coupled receptor 1 family. Homodimer. May also form higher-order oligomers. Interacts (when phosphorylated) with ARRB1 and ARRB2; the interaction is associated with internalization of C5aR. Interacts (via N-terminal domain) with S.aureus chemotaxis inhibitory protein (CHIPS); the interaction blocks the receptor and may thus inhibit the immune response. Sulfation plays a critical role in the association of C5aR with C5a, but no significant role in the ability of the receptor to transduce a signal and mobilize calcium in response to a small peptide agonist. Sulfation at Tyr-14 is important for CHIPS binding. In terms of processing, phosphorylated on serine residues in response to C5a binding, resulting in internalization of the receptor and short-term desensitization to C5a.

It is found in the cell membrane. The protein localises to the cytoplasmic vesicle. Functionally, receptor for the chemotactic and inflammatory peptide anaphylatoxin C5a. The ligand interacts with at least two sites on the receptor: a high-affinity site on the extracellular N-terminus, and a second site in the transmembrane region which activates downstream signaling events. Receptor activation stimulates chemotaxis, granule enzyme release, intracellular calcium release and superoxide anion production. The sequence is that of C5a anaphylatoxin chemotactic receptor 1 (C5AR1) from Gorilla gorilla gorilla (Western lowland gorilla).